Reading from the N-terminus, the 122-residue chain is Large ribosomal subunit protein bL12 (122 aa).

The protein belongs to the bacterial ribosomal protein bL12 family. In terms of assembly, homodimer. Part of the ribosomal stalk of the 50S ribosomal subunit. Forms a multimeric L10(L12)X complex, where L10 forms an elongated spine to which 2 to 4 L12 dimers bind in a sequential fashion. Binds GTP-bound translation factors.

Functionally, forms part of the ribosomal stalk which helps the ribosome interact with GTP-bound translation factors. Is thus essential for accurate translation. The sequence is that of Large ribosomal subunit protein bL12 from Pseudomonas entomophila (strain L48).